A 540-amino-acid polypeptide reads, in one-letter code: Chaperonin GroEL 4 (540 aa).

Residues 29-32 (TLGP), 86-90 (DGTTT), Gly413, 477-479 (NAA), and Asp493 contribute to the ATP site.

The protein belongs to the chaperonin (HSP60) family. In terms of assembly, forms a cylinder of 14 subunits composed of two heptameric rings stacked back-to-back. Interacts with the co-chaperonin GroES.

It is found in the cytoplasm. The enzyme catalyses ATP + H2O + a folded polypeptide = ADP + phosphate + an unfolded polypeptide.. Together with its co-chaperonin GroES, plays an essential role in assisting protein folding. The GroEL-GroES system forms a nano-cage that allows encapsulation of the non-native substrate proteins and provides a physical environment optimized to promote and accelerate protein folding. This Frankia casuarinae (strain DSM 45818 / CECT 9043 / HFP020203 / CcI3) protein is Chaperonin GroEL 4.